A 622-amino-acid polypeptide reads, in one-letter code: Kinesin-like protein KIFC1 (622 aa).

The segment at 1–88 (MKEALEPAKK…KRPGKRPDWD (88 aa)) is disordered. Polar residues predominate over residues 32–41 (SSLSQPQGPT). A coiled-coil region spans residues 95–264 (DLTEELKCYR…QELKGNIRVF (170 aa)). A Kinesin motor domain is found at 260 to 612 (NIRVFCRVRP…LRFASKVNQC (353 aa)). A disordered region spans residues 279 to 323 (PGFLLFPHGPAGPSDPPTRLSLSRSDDRRSTLTRAPAPTTRHDFS). Residue threonine 309 is modified to Phosphothreonine. ATP is bound at residue 360 to 367 (GQTGSGKT).

The protein belongs to the TRAFAC class myosin-kinesin ATPase superfamily. Kinesin family. NCD subfamily. Binds NUBP1 and NUBP2. Interacts with PPP1R42.

Its subcellular location is the nucleus. It is found in the cytoplasm. The protein localises to the cytoskeleton. It localises to the microtubule organizing center. The protein resides in the centrosome. Its subcellular location is the spindle. It is found in the early endosome. Minus end-directed microtubule-dependent motor required for bipolar spindle formation. May contribute to movement of early endocytic vesicles. Regulates cilium formation and structure. This chain is Kinesin-like protein KIFC1, found in Cricetulus griseus (Chinese hamster).